The chain runs to 514 residues: UDP-N-acetylmuramate--L-alanine ligase (514 aa).

127–133 contacts ATP; the sequence is GTHGKTT. The segment covering 495 to 505 has biased composition (low complexity); it reads IGGTIPDIPGG. The interval 495–514 is disordered; it reads IGGTIPDIPGGSTPDASAAG.

The protein belongs to the MurCDEF family.

The protein resides in the cytoplasm. It catalyses the reaction UDP-N-acetyl-alpha-D-muramate + L-alanine + ATP = UDP-N-acetyl-alpha-D-muramoyl-L-alanine + ADP + phosphate + H(+). It functions in the pathway cell wall biogenesis; peptidoglycan biosynthesis. Its function is as follows. Cell wall formation. The protein is UDP-N-acetylmuramate--L-alanine ligase of Salinispora tropica (strain ATCC BAA-916 / DSM 44818 / JCM 13857 / NBRC 105044 / CNB-440).